The primary structure comprises 475 residues: Aspartyl/glutamyl-tRNA(Asn/Gln) amidotransferase subunit B (475 aa).

This sequence belongs to the GatB/GatE family. GatB subfamily. Heterotrimer of A, B and C subunits.

The enzyme catalyses L-glutamyl-tRNA(Gln) + L-glutamine + ATP + H2O = L-glutaminyl-tRNA(Gln) + L-glutamate + ADP + phosphate + H(+). It catalyses the reaction L-aspartyl-tRNA(Asn) + L-glutamine + ATP + H2O = L-asparaginyl-tRNA(Asn) + L-glutamate + ADP + phosphate + 2 H(+). Its function is as follows. Allows the formation of correctly charged Asn-tRNA(Asn) or Gln-tRNA(Gln) through the transamidation of misacylated Asp-tRNA(Asn) or Glu-tRNA(Gln) in organisms which lack either or both of asparaginyl-tRNA or glutaminyl-tRNA synthetases. The reaction takes place in the presence of glutamine and ATP through an activated phospho-Asp-tRNA(Asn) or phospho-Glu-tRNA(Gln). This chain is Aspartyl/glutamyl-tRNA(Asn/Gln) amidotransferase subunit B, found in Pediococcus pentosaceus (strain ATCC 25745 / CCUG 21536 / LMG 10740 / 183-1w).